The sequence spans 510 residues: MLRRALLCLAVAAAPGLYADAPEEEDHVLVLRKSNFAEALAAHKYLLVEFYAPWCGHCKALAPEYAKAAGKLKAEGSEIRLAKVDATEESDLAQQYGVRGYPTIKFFRNGDTASPKEYTAGREADDIVNWLKKRTGPAATTLPDGAAAESLVESSEVAVIGFFKDVESDSAKQFLQAAEAIDDIPFGITSNSDVFSKYQLDKDGVVLFKKFDEGRNNFEGEVTKENLLDFIKYNQLPLVIEFTEQTAPKIFGGEIKTHILLFLPKSVSDYDGKLSNFKTAAESFKGKILFIFIDSDHTDNQRILEFFGLKKEECPAVRLITLEEEMTKYKPESDELTAERITEFCHRFLEGKIKPHLMSQELPEDWDKQPVKVLVGKNFEEVAFDENKNVFVEFYAPWCGHCKQLAPIWDKLGETYKDHENIVIAKMDSTANEVEAIKVHSFPTLKFFPASVDRTVIDYNGERTLDGFKKFLESGGQDGAGDDDDLEDLEEAEEPDMEEDDDQKAVKDEL.

The signal sequence occupies residues 1-19 (MLRRALLCLAVAAAPGLYA). The region spanning 20-136 (DAPEEEDHVL…IVNWLKKRTG (117 aa)) is the Thioredoxin 1 domain. Active-site nucleophile residues include Cys-55 and Cys-58. A disulfide bridge connects residues Cys-55 and Cys-58. The residue at position 202 (Lys-202) is an N6-acetyllysine. An N6-succinyllysine mark is found at Lys-224 and Lys-273. 2 positions are modified to phosphoserine: Ser-333 and Ser-359. Positions 351–477 (GKIKPHLMSQ…FKKFLESGGQ (127 aa)) constitute a Thioredoxin 2 domain. Residues Cys-399 and Cys-402 each act as nucleophile in the active site. Cys-399 and Cys-402 are disulfide-bonded. Ser-429 is subject to Phosphoserine. The tract at residues 473 to 510 (ESGGQDGAGDDDDLEDLEEAEEPDMEEDDDQKAVKDEL) is disordered. Residues 480-502 (AGDDDDLEDLEEAEEPDMEEDDD) are compositionally biased toward acidic residues. The Prevents secretion from ER motif lies at 507–510 (KDEL).

The protein belongs to the protein disulfide isomerase family. As to quaternary structure, heterodimer; heterodimerizes with the protein microsomal triglyceride transfer MTTP. Homodimer. Homodimer. Monomers and homotetramers may also occur. Interacts with P4HA2, forming a heterotetramer consisting of 2 alpha subunits (P4HA2) and 2 beta (P4HB), where P4HB plays the role of a structural subunit; this tetramer catalyzes the formation of 4-hydroxyproline in collagen. Also constitutes the structural subunit of the microsomal triacylglycerol transfer protein MTTP in mammalian cells. Stabilizes both enzymes and retain them in the ER without contributing to the catalytic activity. Binds UBQLN1. Interacts with ERO1B. Interacts with ILDR2. Interacts with ERN1/IRE1A (via N-terminus); the interaction is enhanced by phosphorylation of P4HB by FAM20C in response to endoplasmic reticulum stress and results in attenuation of ERN1 activity. Post-translationally, phosphorylation of Ser-359 by FAM20C is induced by endoplasmic reticulum stress and results in a functional switch from oxidoreductase to molecular chaperone. It also promotes interaction with ERN1.

The protein localises to the endoplasmic reticulum. It is found in the endoplasmic reticulum lumen. Its subcellular location is the melanosome. The protein resides in the cell membrane. It carries out the reaction Catalyzes the rearrangement of -S-S- bonds in proteins.. This multifunctional protein catalyzes the formation, breakage and rearrangement of disulfide bonds. At the cell surface, seems to act as a reductase that cleaves disulfide bonds of proteins attached to the cell. May therefore cause structural modifications of exofacial proteins. Inside the cell, seems to form/rearrange disulfide bonds of nascent proteins. At high concentrations and following phosphorylation by FAM20C, functions as a chaperone that inhibits aggregation of misfolded proteins. At low concentrations, facilitates aggregation (anti-chaperone activity). May be involved with other chaperones in the structural modification of the TG precursor in hormone biogenesis. Also acts as a structural subunit of various enzymes such as prolyl 4-hydroxylase and microsomal triacylglycerol transfer protein MTTP. Receptor for LGALS9; the interaction retains P4HB at the cell surface of Th2 T helper cells, increasing disulfide reductase activity at the plasma membrane, altering the plasma membrane redox state and enhancing cell migration. In Macaca fuscata fuscata (Japanese macaque), this protein is Protein disulfide-isomerase (P4HB).